The following is a 155-amino-acid chain: Large ribosomal subunit protein uL13 (155 aa).

The protein belongs to the universal ribosomal protein uL13 family. In terms of assembly, part of the 50S ribosomal subunit.

Its function is as follows. This protein is one of the early assembly proteins of the 50S ribosomal subunit, although it is not seen to bind rRNA by itself. It is important during the early stages of 50S assembly. The polypeptide is Large ribosomal subunit protein uL13 (Aeropyrum pernix (strain ATCC 700893 / DSM 11879 / JCM 9820 / NBRC 100138 / K1)).